We begin with the raw amino-acid sequence, 312 residues long: Small ribosomal subunit protein uS2 (312 aa).

The protein belongs to the universal ribosomal protein uS2 family. In terms of assembly, component of the small ribosomal subunit. Mature ribosomes consist of a small (40S) and a large (60S) subunit. The 40S subunit contains about 33 different proteins and 1 molecule of RNA (18S). The 60S subunit contains about 49 different proteins and 3 molecules of RNA (25S, 5.8S and 5S). Interacts with ribosomal protein S21.

The protein localises to the cytoplasm. Required for the assembly and/or stability of the 40S ribosomal subunit. Required for the processing of the 20S rRNA-precursor to mature 18S rRNA in a late step of the maturation of 40S ribosomal subunits. This Vitis vinifera (Grape) protein is Small ribosomal subunit protein uS2.